The chain runs to 309 residues: Olfactory receptor 5B21 (309 aa).

The Extracellular portion of the chain corresponds to 1 to 26; sequence MENSTEVTEFILLGLTDDPNLQIPLL. N-linked (GlcNAc...) asparagine glycosylation is present at Asn-3. Residues 27-47 traverse the membrane as a helical segment; it reads LAFLFIYLITLLGNGGMMVII. Residues 48 to 55 are Cytoplasmic-facing; sequence HSDSHLHT. Residues 56 to 76 traverse the membrane as a helical segment; that stretch reads PMYFFLSNLSLVDLGYSSAVA. At 77–95 the chain is on the extracellular side; that stretch reads PKTVAALRSGDKAISYDGC. Cysteines 95 and 177 form a disulfide. A helical membrane pass occupies residues 96 to 116; it reads AAQFFFFVGFATVECYLLASM. Residues 117–137 lie on the Cytoplasmic side of the membrane; that stretch reads AYDRHAAVCRPLHYTTTMTAG. The chain crosses the membrane as a helical span at residues 138–158; that stretch reads VCALLATGSYVSGFLNASIHA. Over 159 to 199 the chain is Extracellular; that stretch reads AGTFRLSFCGSNEINHFFCDIPPLLALSCSDTRISKLVVFV. A helical membrane pass occupies residues 200 to 220; that stretch reads AGFNVFFTLLVILISYFFICI. Topologically, residues 221–235 are cytoplasmic; sequence TIQRMHSAEGQKKVF. The chain crosses the membrane as a helical span at residues 236-256; sequence STCASHLTALSIFYGTIIFMY. At 257–270 the chain is on the extracellular side; that stretch reads LQPNSSQSVDTDKI. An N-linked (GlcNAc...) asparagine glycan is attached at Asn-260. The helical transmembrane segment at 271–291 threads the bilayer; it reads ASVFYTVVIPMLNPLIYSLRN. Over 292 to 309 the chain is Cytoplasmic; it reads KEVKSALWKILNKLYPQY.

Belongs to the G-protein coupled receptor 1 family.

It localises to the cell membrane. Its function is as follows. Odorant receptor. The chain is Olfactory receptor 5B21 from Homo sapiens (Human).